The sequence spans 341 residues: Aspartate carbamoyltransferase catalytic subunit (341 aa).

Residues R74 and T75 each coordinate carbamoyl phosphate. K102 contributes to the L-aspartate binding site. Carbamoyl phosphate is bound by residues R124, H152, and Q155. The L-aspartate site is built by R190 and R244. Positions 285 and 286 each coordinate carbamoyl phosphate.

This sequence belongs to the aspartate/ornithine carbamoyltransferase superfamily. ATCase family. In terms of assembly, heterododecamer (2C3:3R2) of six catalytic PyrB chains organized as two trimers (C3), and six regulatory PyrI chains organized as three dimers (R2).

It catalyses the reaction carbamoyl phosphate + L-aspartate = N-carbamoyl-L-aspartate + phosphate + H(+). It functions in the pathway pyrimidine metabolism; UMP biosynthesis via de novo pathway; (S)-dihydroorotate from bicarbonate: step 2/3. Functionally, catalyzes the condensation of carbamoyl phosphate and aspartate to form carbamoyl aspartate and inorganic phosphate, the committed step in the de novo pyrimidine nucleotide biosynthesis pathway. The polypeptide is Aspartate carbamoyltransferase catalytic subunit (Novosphingobium aromaticivorans (strain ATCC 700278 / DSM 12444 / CCUG 56034 / CIP 105152 / NBRC 16084 / F199)).